Here is a 281-residue protein sequence, read N- to C-terminus: CMT1A duplicated region transcript 15 protein-like protein (281 aa).

Disordered stretches follow at residues 107-131 (KPAWEEPPPERALEVEGAPAKDQPS) and 150-187 (AENVAGERSGREGVTSTAPASRSHAAPSPGHGGKHGGG). Residues 108–120 (PAWEEPPPERALE) show a composition bias toward basic and acidic residues. Positions 165–178 (STAPASRSHAAPSP) are enriched in low complexity. A helical transmembrane segment spans residues 207–227 (AGTTALLLQGLFIVLILVGYI).

It is found in the membrane. The sequence is that of CMT1A duplicated region transcript 15 protein-like protein (CDRT15L2) from Homo sapiens (Human).